The sequence spans 239 residues: DNA repair protein RecO (239 aa).

This sequence belongs to the RecO family.

Its function is as follows. Involved in DNA repair and RecF pathway recombination. This chain is DNA repair protein RecO, found in Bifidobacterium longum (strain DJO10A).